A 420-amino-acid chain; its full sequence is Histidine--tRNA ligase (420 aa).

It belongs to the class-II aminoacyl-tRNA synthetase family. Homodimer.

It is found in the cytoplasm. It catalyses the reaction tRNA(His) + L-histidine + ATP = L-histidyl-tRNA(His) + AMP + diphosphate + H(+). The polypeptide is Histidine--tRNA ligase (Clostridioides difficile (strain 630) (Peptoclostridium difficile)).